A 251-amino-acid polypeptide reads, in one-letter code: Azurocidin (251 aa).

An N-terminal signal peptide occupies residues Met1 to Ala19. A propeptide spans Gly20–Asp26 (removed in mature form). Positions Leu25–Asp26 are cleaved as a propeptide — dipeptide found in non-mature form. The 218-residue stretch at Ile27–Asn244 folds into the Peptidase S1 domain. Residues Asn46–Gln70 form a possesses antibiotic activity region. A disulfide bridge connects residues Cys52 and Cys68. N-linked (GlcNAc...) asparagine; partial glycosylation is present at Asn126. The N-linked (GlcNAc...) asparagine glycan is linked to Asn140. 3 disulfides stabilise this stretch: Cys149-Cys207, Cys180-Cys186, and Cys197-Cys222. Asn171 carries N-linked (GlcNAc...) asparagine; partial glycosylation. Positions Gly249–Ala251 are cleaved as a propeptide — removed in mature form.

This sequence belongs to the peptidase S1 family. Elastase subfamily. Post-translationally, cleavage of the N-terminal propeptide which is composed of 7 amino acids occurs in two steps. The initial cleavage of 5 amino acids is followed by the cleavage of a dipeptide to produce the mature form.

The protein localises to the cytoplasmic granule membrane. This is a neutrophil granule-derived antibacterial and monocyte- and fibroblast-specific chemotactic glycoprotein. Binds heparin. The cytotoxic action is limited to many species of Gram-negative bacteria; this specificity may be explained by a strong affinity of the very basic N-terminal half for the negatively charged lipopolysaccharides that are unique to the Gram-negative bacterial outer envelope. It may play a role in mediating recruitment of monocytes in the second wave of inflammation. Has antibacterial activity against the Gram-negative bacterium P.aeruginosa, this activity is inhibited by LPS from P.aeruginosa. Acting alone, it does not have antimicrobial activity against the Gram-negative bacteria A.actinomycetemcomitans ATCC 29532, A.actinomycetemcomitans NCTC 9709, A.actinomycetemcomitans FDC-Y4, H.aphrophilus ATCC 13252, E.corrodens ATCC 23834, C.sputigena ATCC 33123, Capnocytophaga sp ATCC 33124, Capnocytophaga sp ATCC 27872 or E.coli ML-35. Has antibacterial activity against C.sputigena ATCC 33123 when acting synergistically with either elastase or cathepsin G. This chain is Azurocidin, found in Homo sapiens (Human).